The sequence spans 242 residues: Phosphoribosylaminoimidazole-succinocarboxamide synthase (242 aa).

It belongs to the SAICAR synthetase family.

It catalyses the reaction 5-amino-1-(5-phospho-D-ribosyl)imidazole-4-carboxylate + L-aspartate + ATP = (2S)-2-[5-amino-1-(5-phospho-beta-D-ribosyl)imidazole-4-carboxamido]succinate + ADP + phosphate + 2 H(+). Its pathway is purine metabolism; IMP biosynthesis via de novo pathway; 5-amino-1-(5-phospho-D-ribosyl)imidazole-4-carboxamide from 5-amino-1-(5-phospho-D-ribosyl)imidazole-4-carboxylate: step 1/2. The sequence is that of Phosphoribosylaminoimidazole-succinocarboxamide synthase from Ehrlichia chaffeensis (strain ATCC CRL-10679 / Arkansas).